We begin with the raw amino-acid sequence, 283 residues long: 5'-nucleotidase SurE (283 aa).

4 residues coordinate a divalent metal cation: Asp14, Asp15, Ser47, and Asn105.

This sequence belongs to the SurE nucleotidase family. Requires a divalent metal cation as cofactor.

Its subcellular location is the cytoplasm. It catalyses the reaction a ribonucleoside 5'-phosphate + H2O = a ribonucleoside + phosphate. Its function is as follows. Nucleotidase that shows phosphatase activity on nucleoside 5'-monophosphates. In Chlamydia trachomatis serovar A (strain ATCC VR-571B / DSM 19440 / HAR-13), this protein is 5'-nucleotidase SurE.